The following is a 456-amino-acid chain: Bifunctional protein GlmU (456 aa).

Residues 1–229 (MTKKALSAVI…VMEVEGANNR (229 aa)) are pyrophosphorylase. Residues 11 to 14 (LAAG), K25, Q76, 81 to 82 (GT), 103 to 105 (YGD), G140, E154, N169, and N227 contribute to the UDP-N-acetyl-alpha-D-glucosamine site. Residue D105 participates in Mg(2+) binding. Residue N227 participates in Mg(2+) binding. The tract at residues 230-250 (LQLAALERYLQNKQASKLLLE) is linker. Residues 251–456 (GVMIYDPARF…QGWQRPIKKK (206 aa)) form an N-acetyltransferase region. 2 residues coordinate UDP-N-acetyl-alpha-D-glucosamine: R333 and K351. H363 (proton acceptor) is an active-site residue. UDP-N-acetyl-alpha-D-glucosamine is bound by residues Y366 and N377. Acetyl-CoA contacts are provided by residues A380, 386-387 (NY), S405, A423, and R440.

It in the N-terminal section; belongs to the N-acetylglucosamine-1-phosphate uridyltransferase family. The protein in the C-terminal section; belongs to the transferase hexapeptide repeat family. As to quaternary structure, homotrimer. It depends on Mg(2+) as a cofactor.

Its subcellular location is the cytoplasm. It catalyses the reaction alpha-D-glucosamine 1-phosphate + acetyl-CoA = N-acetyl-alpha-D-glucosamine 1-phosphate + CoA + H(+). The catalysed reaction is N-acetyl-alpha-D-glucosamine 1-phosphate + UTP + H(+) = UDP-N-acetyl-alpha-D-glucosamine + diphosphate. The protein operates within nucleotide-sugar biosynthesis; UDP-N-acetyl-alpha-D-glucosamine biosynthesis; N-acetyl-alpha-D-glucosamine 1-phosphate from alpha-D-glucosamine 6-phosphate (route II): step 2/2. Its pathway is nucleotide-sugar biosynthesis; UDP-N-acetyl-alpha-D-glucosamine biosynthesis; UDP-N-acetyl-alpha-D-glucosamine from N-acetyl-alpha-D-glucosamine 1-phosphate: step 1/1. It participates in bacterial outer membrane biogenesis; LPS lipid A biosynthesis. In terms of biological role, catalyzes the last two sequential reactions in the de novo biosynthetic pathway for UDP-N-acetylglucosamine (UDP-GlcNAc). The C-terminal domain catalyzes the transfer of acetyl group from acetyl coenzyme A to glucosamine-1-phosphate (GlcN-1-P) to produce N-acetylglucosamine-1-phosphate (GlcNAc-1-P), which is converted into UDP-GlcNAc by the transfer of uridine 5-monophosphate (from uridine 5-triphosphate), a reaction catalyzed by the N-terminal domain. This chain is Bifunctional protein GlmU, found in Haemophilus influenzae (strain PittEE).